The primary structure comprises 554 residues: uncharacterized protein (554 aa).

This sequence to M.jannaschii MJ0047, MJ0162 and MJ1236.

This is an uncharacterized protein from Synechocystis sp. (strain ATCC 27184 / PCC 6803 / Kazusa).